A 216-amino-acid chain; its full sequence is MOB kinase activator-like 1 homolog B (216 aa).

Zn(2+) contacts are provided by Cys79, Cys84, His161, and His166.

The protein belongs to the MOB1/phocein family.

The protein is MOB kinase activator-like 1 homolog B (mobB) of Dictyostelium discoideum (Social amoeba).